Here is a 262-residue protein sequence, read N- to C-terminus: Type III pantothenate kinase (262 aa).

D7–K14 contributes to the ATP binding site. Substrate contacts are provided by residues Y96 and G103–R106. Catalysis depends on D105, which acts as the Proton acceptor. T137 contacts ATP. T187 contacts substrate.

This sequence belongs to the type III pantothenate kinase family. In terms of assembly, homodimer. It depends on NH4(+) as a cofactor. The cofactor is K(+).

Its subcellular location is the cytoplasm. The catalysed reaction is (R)-pantothenate + ATP = (R)-4'-phosphopantothenate + ADP + H(+). It participates in cofactor biosynthesis; coenzyme A biosynthesis; CoA from (R)-pantothenate: step 1/5. Its function is as follows. Catalyzes the phosphorylation of pantothenate (Pan), the first step in CoA biosynthesis. The chain is Type III pantothenate kinase from Leptothrix cholodnii (strain ATCC 51168 / LMG 8142 / SP-6) (Leptothrix discophora (strain SP-6)).